The chain runs to 317 residues: Beta-sarcoglycan (317 aa).

Residues 1 to 31 are disordered; sequence MAAAAAATEQQSSNGPVKKSMREKAVERRNV. At 1 to 64 the chain is on the cytoplasmic side; it reads MAAAAAATEQ…GLRGRKGNLA (64 aa). The span at 20-31 shows a compositional bias: basic and acidic residues; that stretch reads SMREKAVERRNV. Residues 65 to 85 form a helical; Signal-anchor for type II membrane protein membrane-spanning segment; that stretch reads ICVIVLLFILAVINLIITLVI. At 86 to 317 the chain is on the extracellular side; it reads WAVIRIGPNG…TSDNPCGDLY (232 aa). Asn-157, Asn-210, and Asn-257 each carry an N-linked (GlcNAc...) asparagine glycan. 2 cysteine pairs are disulfide-bonded: Cys-287–Cys-313 and Cys-289–Cys-306.

Belongs to the sarcoglycan beta/delta/gamma/zeta family. As to quaternary structure, cross-link to form 2 major subcomplexes: one consisting of SGCB, SGCD and SGCG and the other consisting of SGCB and SGCD. The association between SGCB and SGCG is particularly strong while SGCA is loosely associated with the other sarcoglycans. Post-translationally, disulfide bonds are present.

The protein localises to the cell membrane. It localises to the sarcolemma. Its subcellular location is the cytoplasm. The protein resides in the cytoskeleton. Its function is as follows. Component of the sarcoglycan complex, a subcomplex of the dystrophin-glycoprotein complex which forms a link between the F-actin cytoskeleton and the extracellular matrix. In Bos taurus (Bovine), this protein is Beta-sarcoglycan (SGCB).